The following is a 142-amino-acid chain: Hemoglobin subunit pi (142 aa).

A Globin domain is found at 2–142; sequence ALTQAEKAAV…ISSVLTEKYR (141 aa). Residues His-59 and His-88 each contribute to the heme b site.

Belongs to the globin family.

The pi' chain is the counterpart of the alpha chain in the major early embryonic hemoglobin P. This chain is Hemoglobin subunit pi, found in Gallus gallus (Chicken).